Here is a 606-residue protein sequence, read N- to C-terminus: Pro-secreted protein ORF2 (606 aa).

An N-terminal signal peptide occupies residues 1 to 19; sequence MSLCRLLLMLAMCCGVSRG. A disordered region spans residues 22–54; that stretch reads TLPAGGRRGQRRRDNSAQWSTQQRPEGAVGPAP. A Nuclear localization signal motif is present at residues 28–34; it reads RRGQRRR. N-linked (GlcNAc...) asparagine; by host glycosylation occurs at Asn255. The interval 313–339 is particle formation; sequence ILGVLFNLADTVLGGLPSTLLRAASGQ. N-linked (GlcNAc...) asparagine; by host glycosylation occurs at Asn510.

It belongs to the hepevirus capsid protein family. Homodimer. As to quaternary structure, self-assembles to form the capsid. The capsid is dominated by dimers that define the 30 morphological units. Interacts with phosphorylated protein ORF3. Post-translationally, N-glycosylated.

The protein resides in the secreted. It localises to the virion. It is found in the host cytoplasm. The protein localises to the host endoplasmic reticulum. Its subcellular location is the host Golgi apparatus. The protein resides in the host cell surface. It localises to the host nucleus. In terms of biological role, plays a role in the inhibition of host antibody-mediated neutralization without blocking viral cell entry. Functionally, forms an icosahedral capsid with a T=1 symmetry and a 34 nm diameter. The capsid is composed of 60 copies linked to each other. Binds to the 5' end of the genomic RNA to mediate genome encapsidation. This Gallus gallus (Chicken) protein is Pro-secreted protein ORF2.